The primary structure comprises 164 residues: 6,7-dimethyl-8-ribityllumazine synthase (164 aa).

5-amino-6-(D-ribitylamino)uracil is bound by residues tyrosine 27, 58–60 (ALE), and 87–89 (CVI). Residue 92 to 93 (ET) coordinates (2S)-2-hydroxy-3-oxobutyl phosphate. Catalysis depends on histidine 95, which acts as the Proton donor. Residue asparagine 120 participates in 5-amino-6-(D-ribitylamino)uracil binding. Arginine 134 contacts (2S)-2-hydroxy-3-oxobutyl phosphate.

This sequence belongs to the DMRL synthase family.

The enzyme catalyses (2S)-2-hydroxy-3-oxobutyl phosphate + 5-amino-6-(D-ribitylamino)uracil = 6,7-dimethyl-8-(1-D-ribityl)lumazine + phosphate + 2 H2O + H(+). Its pathway is cofactor biosynthesis; riboflavin biosynthesis; riboflavin from 2-hydroxy-3-oxobutyl phosphate and 5-amino-6-(D-ribitylamino)uracil: step 1/2. Functionally, catalyzes the formation of 6,7-dimethyl-8-ribityllumazine by condensation of 5-amino-6-(D-ribitylamino)uracil with 3,4-dihydroxy-2-butanone 4-phosphate. This is the penultimate step in the biosynthesis of riboflavin. The polypeptide is 6,7-dimethyl-8-ribityllumazine synthase (Methylocella silvestris (strain DSM 15510 / CIP 108128 / LMG 27833 / NCIMB 13906 / BL2)).